A 257-amino-acid polypeptide reads, in one-letter code: MAVGKNNNKMGKKGGKKKAVDPFSRKEWYDIKAPNMFNTRQVGKTLINRTQGTKIASEGLKGRVFEVSLGDLNNSEADFRKFKLIAEDVQGKNVLTNFHAMSMTHDKLCSIVKKWHTLIEANTAVKTTDGYTLRVFVIAFTKKSVNQVKKTSYTKTSKIRKIRSEMIGCIEKEVTGCDLKEVVSKLIPDSIGKDIEKTCSKLYPLQEVYIRKVKIIKRPKVDLGRLHDLHGDSITVGADGEKVDRPDDYEPPVQQEV.

Residues 237-257 are disordered; sequence GADGEKVDRPDDYEPPVQQEV. A compositionally biased stretch (basic and acidic residues) spans 239–248; the sequence is DGEKVDRPDD.

The protein belongs to the eukaryotic ribosomal protein eS1 family. As to quaternary structure, component of the small ribosomal subunit. Mature ribosomes consist of a small (40S) and a large (60S) subunit. The 40S subunit contains about 33 different proteins and 1 molecule of RNA (18S). The 60S subunit contains about 49 different proteins and 3 molecules of RNA (28S, 5.8S and 5S).

Its subcellular location is the cytoplasm. The protein is Small ribosomal subunit protein eS1 of Caenorhabditis elegans.